The sequence spans 385 residues: D-alanine--D-alanine ligase (385 aa).

The ATP-grasp domain occupies 165-375 (KRVFTSFGLK…YPELVDRLVE (211 aa)). Position 201 to 256 (201 to 256 (AGEHGWPLFVKPARAGSSIGITKVDDLAGLDEAVAEAQRHDPKIIVEALLRGREIE)) interacts with ATP. Residues aspartate 329, glutamate 342, and asparagine 344 each coordinate Mg(2+).

The protein belongs to the D-alanine--D-alanine ligase family. Mg(2+) is required as a cofactor. It depends on Mn(2+) as a cofactor.

The protein localises to the cytoplasm. It carries out the reaction 2 D-alanine + ATP = D-alanyl-D-alanine + ADP + phosphate + H(+). The protein operates within cell wall biogenesis; peptidoglycan biosynthesis. Its function is as follows. Cell wall formation. In Streptomyces avermitilis (strain ATCC 31267 / DSM 46492 / JCM 5070 / NBRC 14893 / NCIMB 12804 / NRRL 8165 / MA-4680), this protein is D-alanine--D-alanine ligase.